The following is a 348-amino-acid chain: Anthranilate phosphoribosyltransferase (348 aa).

5-phospho-alpha-D-ribose 1-diphosphate contacts are provided by residues Gly81, 84–85 (GD), Thr89, 91–94 (NIST), 109–117 (KHGNRAMSS), and Ser121. Gly81 serves as a coordination point for anthranilate. Mg(2+) is bound at residue Ser93. Position 112 (Asn112) interacts with anthranilate. Position 167 (Arg167) interacts with anthranilate. Positions 226 and 227 each coordinate Mg(2+).

The protein belongs to the anthranilate phosphoribosyltransferase family. Homodimer. Mg(2+) is required as a cofactor.

The enzyme catalyses N-(5-phospho-beta-D-ribosyl)anthranilate + diphosphate = 5-phospho-alpha-D-ribose 1-diphosphate + anthranilate. It functions in the pathway amino-acid biosynthesis; L-tryptophan biosynthesis; L-tryptophan from chorismate: step 2/5. Catalyzes the transfer of the phosphoribosyl group of 5-phosphorylribose-1-pyrophosphate (PRPP) to anthranilate to yield N-(5'-phosphoribosyl)-anthranilate (PRA). This is Anthranilate phosphoribosyltransferase from Thermomicrobium roseum (strain ATCC 27502 / DSM 5159 / P-2).